Here is a 298-residue protein sequence, read N- to C-terminus: MADHTTKEQKSFSFLAHSPSFDHSSLSYPLFDWEEDLLALQENSGSQAFPFTTTSLPLPDLEPLSEDVLNSYSSASWNETEQNRGDGASSEKKRENGTVKETTKKRKINERHREHSVRIISDITTYTTSSAPTTLSKETVSRYFYMPITQAAIALNVGLTLLKRRCRELGIRRWPHRKLMSLNTLISNVKELQKMEGEENAEKLQDALEMLEKEKRTIEDLPDLEFKDKTKRLRQACFKANHKRKKKRSLKSDQSQVPSCSSSGSVPSDESVDEAGMESDEEMKYLLCGFSSEFTSGL.

Basic and acidic residues-rich tracts occupy residues 1-10 (MADHTTKEQK) and 81-102 (EQNR…VKET). Disordered stretches follow at residues 1–22 (MADH…PSFD) and 73–112 (SSAS…NERH). An RWP-RK domain is found at 121-203 (SDITTYTTSS…KMEGEENAEK (83 aa)). A coiled-coil region spans residues 188-222 (NVKELQKMEGEENAEKLQDALEMLEKEKRTIEDLP). Residues 241-279 (NHKRKKKRSLKSDQSQVPSCSSSGSVPSDESVDEAGMES) are disordered. The segment covering 252–269 (SDQSQVPSCSSSGSVPSD) has biased composition (low complexity). Acidic residues predominate over residues 270-279 (ESVDEAGMES).

It is found in the nucleus. Functionally, putative transcription factor. The chain is Protein RKD2 (RKD2) from Arabidopsis thaliana (Mouse-ear cress).